Here is an 89-residue protein sequence, read N- to C-terminus: Small ribosomal subunit protein uS19 (89 aa).

The protein belongs to the universal ribosomal protein uS19 family.

Its function is as follows. Protein S19 forms a complex with S13 that binds strongly to the 16S ribosomal RNA. The chain is Small ribosomal subunit protein uS19 from Bacteroides fragilis (strain YCH46).